The sequence spans 95 residues: uncharacterized protein (95 aa).

This is an uncharacterized protein from Acheta domesticus (House cricket).